The sequence spans 284 residues: Efem/EfeO family lipoprotein (284 aa).

Positions 1–17 (MKKLTTLLLASTLLIAA) are cleaved as a signal peptide. Cys18 is lipidated: N-palmitoyl cysteine. Cys18 carries S-diacylglycerol cysteine lipidation.

This sequence belongs to the EfeM/EfeO family.

The protein resides in the cell membrane. The sequence is that of Efem/EfeO family lipoprotein from Staphylococcus aureus (strain MSSA476).